A 74-amino-acid chain; its full sequence is Cecropin-P4 (74 aa).

An N-terminal signal peptide occupies residues 1–13 (MFLMYLLVQTTES). Residues 45–74 (HRRSVAHQEEASLHVKTDELPSPDTVREQL) constitute a propeptide, removed in mature form. The disordered stretch occupies residues 51–74 (HQEEASLHVKTDELPSPDTVREQL).

Belongs to the cecropin family. Expressed in the body wall, intestine, uterus and ovary.

The protein localises to the secreted. In terms of biological role, has antibacterial activity against several Gram-positive and Gram-negative bacteria. Is weakly active against yeasts. Acts by a nonpore mechanism. This chain is Cecropin-P4 (ASCEC-4), found in Ascaris suum (Pig roundworm).